A 139-amino-acid chain; its full sequence is MRLTQGAFSYLPDLTDAQIIKQIDYCLSRGWSVGVEWTDDPHPRNAYWELWGLPLFDVKDSSAILYEVNECRRLNPEGYIKLVAFNAARGTESSASAFIVQRPKSEPGFYLERTEAEGRMIRYTIHSYAVARNPEGSRY.

Belongs to the RuBisCO small chain family. Heterohexadecamer of 8 large and 8 small subunits.

Its subcellular location is the plastid. It is found in the chloroplast. RuBisCO catalyzes two reactions: the carboxylation of D-ribulose 1,5-bisphosphate, the primary event in carbon dioxide fixation, as well as the oxidative fragmentation of the pentose substrate in the photorespiration process. Both reactions occur simultaneously and in competition at the same active site. Although the small subunit is not catalytic it is essential for maximal activity. The polypeptide is Ribulose bisphosphate carboxylase small subunit (Olisthodiscus luteus (Marine phytoflagellate)).